The primary structure comprises 92 residues: Cell division topological specificity factor (92 aa).

Belongs to the MinE family.

Prevents the cell division inhibition by proteins MinC and MinD at internal division sites while permitting inhibition at polar sites. This ensures cell division at the proper site by restricting the formation of a division septum at the midpoint of the long axis of the cell. This Syntrophobacter fumaroxidans (strain DSM 10017 / MPOB) protein is Cell division topological specificity factor.